The primary structure comprises 155 residues: Small ribosomal subunit protein uS7c (155 aa).

Belongs to the universal ribosomal protein uS7 family. Part of the 30S ribosomal subunit.

It is found in the plastid. The protein localises to the chloroplast. Its function is as follows. One of the primary rRNA binding proteins, it binds directly to 16S rRNA where it nucleates assembly of the head domain of the 30S subunit. The sequence is that of Small ribosomal subunit protein uS7c (rps7) from Spathiphyllum wallisii (Peace lily).